A 538-amino-acid chain; its full sequence is MKFKTFSKSAVLLTASLAVLAACGSKNTASSPDYKLEGVTFPLQEKKTLKFMTASSPLSPKDPNEKLILQRLEKETGVHIDWTNYQSDFAEKRNLDISSGDLPDAIHNDGASDVDLMNWAKKGVIIPVEDLIDKYMPNLKKILDEKPEYKALMTAPDGHIYSFPWIEELGDGKESIHSVNDMAWINKDWLKKLGLEMPKTTDDLIKVLEAFKNGDPNGNGEADEIPFSFISGNGNEDFKFLFAAFGIGDNDDHLVVGNDGKVDFTADNDNYKEGVKFIRQLQEKGLIDKEAFEHDWNSYIAKGHDQKFGVYFTWDKNNVTGSNESYDVLPVLAGPSGQKHVARTNGMGFARDKMVITSVNKNLELTAKWIDAQYAPLQSVQNNWGTYGDDKQQNIFELDQASNSLKHLPLNGTAPAELRQKTEVGGPLAILDSYYGKVTTMPDDAKWRLDLIKEYYVPYMSNVNNYPRVFMTQEDLDKIAHIEADMNDYIYRKRAEWIVNGNIDTEWDDYKKELEKYGLSDYLAIKQKYYDQYQANKN.

A signal peptide spans methionine 1–alanine 22. A lipid anchor (N-palmitoyl cysteine) is attached at cysteine 23. Cysteine 23 carries S-diacylglycerol cysteine lipidation. Glutamate 167 is a substrate binding site. Ca(2+) is bound by residues aspartate 215, asparagine 217, asparagine 219, glutamate 221, aspartate 223, and glutamate 224. Position 235 (asparagine 235) interacts with substrate. Ca(2+)-binding residues include aspartate 263, phenylalanine 264, aspartate 267, and asparagine 268. Positions 314, 318, 353, 384, 419, and 423 each coordinate substrate.

This sequence belongs to the bacterial solute-binding protein 1 family. The complex is composed of two ATP-binding proteins (MsmK), two transmembrane proteins (FusB and FusC) and a solute-binding protein (FusA).

It is found in the cell membrane. In terms of biological role, part of the ABC transporter complex FusABC-MsmK involved in short- and long-chain fructooligosaccharide (FOS) import. Required for the utilization of long-chain FOSs. Binds kestose, nystose, fructofuranosyl-nystose and inulin, but not sucrose. Has a preference for long-chain FOSs (tetrasaccharides and larger). The sequence is that of Fructooligosaccharide ABC transporter substrate-binding protein FusA from Streptococcus pneumoniae serotype 4 (strain ATCC BAA-334 / TIGR4).